We begin with the raw amino-acid sequence, 355 residues long: Membrane cofactor protein (355 aa).

The first 42 residues, 1–42, serve as a signal peptide directing secretion; it reads MTAAPLTPDPTHPRRRRKSYTFFSLGIYAEALLFLLSSLSDA. 4 Sushi domains span residues 43 to 104, 105 to 168, 169 to 234, and 235 to 294; these read CEPP…GCIK, VQCT…SCKK, VYCL…ECKV, and VKCP…QCLK. Residues 43–326 are Extracellular-facing; sequence CEPPPPFEAM…GIFGQEFDAW (284 aa). Disulfide bonds link Cys-107–Cys-149, Cys-135–Cys-166, Cys-171–Cys-219, Cys-200–Cys-232, Cys-237–Cys-279, and Cys-265–Cys-292. Residue Asn-179 is glycosylated (N-linked (GlcNAc...) asparagine). A glycan (O-linked (GalNAc...) threonine) is linked at Thr-301. Residues 327 to 347 traverse the membrane as a helical segment; the sequence is IIALIVVTSVVGVIVICLIIL. Topologically, residues 348-355 are cytoplasmic; the sequence is RCSEYRKK.

In terms of assembly, interacts with C3b. Interacts with C4b. Interacts with moesin/MSN. Post-translationally, O-glycosylated. In terms of processing, N-glycosylated. In terms of tissue distribution, specifically expressed in testis. Within testis, present only in elongated spermatids and spermatozoa (at protein level).

It localises to the cytoplasmic vesicle. It is found in the secretory vesicle. The protein resides in the acrosome inner membrane. Functionally, may be involved in the fusion of the spermatozoa with the oocyte during fertilization. The chain is Membrane cofactor protein (Cd46) from Rattus norvegicus (Rat).